Reading from the N-terminus, the 406-residue chain is MQHNSLIARFARGNLVIQILVGIILGISLALVSPSSAESVGMLGSLFVGALKAIAPILVFILVAASIANQKKNQHTHMRPIIVMYLAGTFFAALTAVVLSFMFPTTLTLVTGAEGANPPQGIMEVIKTLLFKLVDNPVNALMSANYIGILAWGVGLGLALHHASDTTKAVFEDLSHSVSHIVRFIIRLAPFGIFGLVASTFATTGFDALAGYAHLLVVLLSAMAIIALIVNPAMVYVKTKQNPYPLVFQCLRESGVTAFFTRSSAANIPVNMALCEKLKLDEDTYSVSIPLGATINMAGAAITITTLTLAAVHTMGIEVDLMTALLLSVVAAVSACGASGVAGGSLLLIPLACGLFGISNDIAMQVVAVGFIIGVIQDSAETALNSSTDVVFTAAVCESEAQKAKG.

9 helical membrane-spanning segments follow: residues 15-35, 47-67, 81-101, 140-160, 191-211, 215-235, 289-309, 315-335, and 362-382; these read LVIQ…VSPS, FVGA…AASI, IIVM…VLSF, ALMS…GLAL, FGIF…ALAG, LLVV…PAMV, IPLG…TLTL, MGIE…AVSA, and IAMQ…SAET.

The protein belongs to the dicarboxylate/amino acid:cation symporter (DAACS) (TC 2.A.23) family.

Its subcellular location is the cell inner membrane. It catalyses the reaction L-serine(in) + Na(+)(in) = L-serine(out) + Na(+)(out). It carries out the reaction L-threonine(in) + Na(+)(in) = L-threonine(out) + Na(+)(out). Involved in the import of serine and threonine into the cell, with the concomitant import of sodium (symport system). The sequence is that of Serine/threonine transporter SstT from Vibrio vulnificus (strain YJ016).